We begin with the raw amino-acid sequence, 420 residues long: Multiple sugar-binding protein (420 aa).

The first 22 residues, 1–22, serve as a signal peptide directing secretion; it reads MKWYKKIGLLGIVGLTSVLLAA. The N-palmitoyl cysteine moiety is linked to residue C23. C23 is lipidated: S-diacylglycerol cysteine.

The protein belongs to the bacterial solute-binding protein 1 family.

Its subcellular location is the cell membrane. In terms of biological role, involved in a binding protein-dependent transport system responsible for the uptake of melibiose, raffinose and isomaltotriose. This Streptococcus mutans serotype c (strain ATCC 700610 / UA159) protein is Multiple sugar-binding protein.